Here is a 318-residue protein sequence, read N- to C-terminus: Probable endolytic peptidoglycan transglycosylase RlpA (318 aa).

The N-terminal stretch at 1-21 (MMDKRVVAVAAVLWNVQMLFA) is a signal peptide. The segment at 121–191 (DPNAHASQQR…GVANTTDVPA (71 aa)) is disordered. Over residues 125–137 (HASQQRNDRQTSP) the composition is skewed to polar residues.

Belongs to the RlpA family.

Lytic transglycosylase with a strong preference for naked glycan strands that lack stem peptides. This is Probable endolytic peptidoglycan transglycosylase RlpA from Treponema pallidum (strain Nichols).